An 88-amino-acid polypeptide reads, in one-letter code: Protein ORGAN SIZE RELATED 1 (88 aa).

Positions 25–76 (ITARSVALLLFLSLLLLILPPFLPPLPPPPATLLLLPLLLMILLIFLAFSPS) are organ Size Related (OSR) domain. The next 2 helical transmembrane spans lie at 30–50 (VALL…LPPL) and 53–73 (PPAT…FLAF).

Belongs to the plant organ size related (OSR) protein family. In terms of tissue distribution, mostly expressed in flowers, and, to a lower extent, in leaves and cotyledons.

It is found in the membrane. Its subcellular location is the endoplasmic reticulum. It localises to the nucleus. The protein localises to the cytoplasm. Together with ARGOS and ARL, regulates organ growth and final organ size. Promotes both cell expansion and proliferation-dependent organ growth, in an ANT-dependent manner. This Arabidopsis thaliana (Mouse-ear cress) protein is Protein ORGAN SIZE RELATED 1.